Consider the following 298-residue polypeptide: NAD kinase (298 aa).

D80 functions as the Proton acceptor in the catalytic mechanism. Residues 80-81 (DG), 154-155 (ND), R182, D184, 195-200 (TAYALS), A219, and Q253 each bind NAD(+).

This sequence belongs to the NAD kinase family. The cofactor is a divalent metal cation.

Its subcellular location is the cytoplasm. The enzyme catalyses NAD(+) + ATP = ADP + NADP(+) + H(+). Involved in the regulation of the intracellular balance of NAD and NADP, and is a key enzyme in the biosynthesis of NADP. Catalyzes specifically the phosphorylation on 2'-hydroxyl of the adenosine moiety of NAD to yield NADP. This Paracidovorax citrulli (strain AAC00-1) (Acidovorax citrulli) protein is NAD kinase.